A 207-amino-acid chain; its full sequence is MSVTYVASCKLPTPFGVFDMHGFQEVGTQKEHIALTLGDIGDGASVLARTHSECLTGDALFSMRCDCGYQLDEALRSIAAEGRGILLYLRQEGRGIGLLNKIRAYNLQDQGADTVEANEQLGFAADMRDYSMCKPMLYHLGISRIRLMTNNPRKVDSLTKLGIEVVERVPLEVGRNPHNRNYLATKAGKLGHLLTTHQDDDYVVAAK.

A GTP-binding site is contributed by 49-53; sequence RTHSE. Residues C54, C65, and C67 each coordinate Zn(2+). GTP is bound by residues Q70, 92–94, and T114; that span reads EGR. Residue D126 is the Proton acceptor of the active site. R128 serves as the catalytic Nucleophile. The GTP site is built by T149 and K154.

It belongs to the GTP cyclohydrolase II family. Requires Zn(2+) as cofactor.

The enzyme catalyses GTP + 4 H2O = 2,5-diamino-6-hydroxy-4-(5-phosphoribosylamino)-pyrimidine + formate + 2 phosphate + 3 H(+). Its pathway is cofactor biosynthesis; riboflavin biosynthesis; 5-amino-6-(D-ribitylamino)uracil from GTP: step 1/4. Catalyzes the conversion of GTP to 2,5-diamino-6-ribosylamino-4(3H)-pyrimidinone 5'-phosphate (DARP), formate and pyrophosphate. This chain is GTP cyclohydrolase-2, found in Hahella chejuensis (strain KCTC 2396).